We begin with the raw amino-acid sequence, 279 residues long: Tryptophan synthase alpha chain (279 aa).

Active-site proton acceptor residues include Glu-63 and Asp-74.

Belongs to the TrpA family. Tetramer of two alpha and two beta chains.

The catalysed reaction is (1S,2R)-1-C-(indol-3-yl)glycerol 3-phosphate + L-serine = D-glyceraldehyde 3-phosphate + L-tryptophan + H2O. It participates in amino-acid biosynthesis; L-tryptophan biosynthesis; L-tryptophan from chorismate: step 5/5. In terms of biological role, the alpha subunit is responsible for the aldol cleavage of indoleglycerol phosphate to indole and glyceraldehyde 3-phosphate. In Prochlorococcus marinus subsp. pastoris (strain CCMP1986 / NIES-2087 / MED4), this protein is Tryptophan synthase alpha chain.